The chain runs to 259 residues: Proteasome assembly chaperone 2 (259 aa).

This sequence belongs to the PSMG2 family. As to quaternary structure, forms a heterodimer with psmg1. Degraded by the proteasome upon completion of 20S proteasome maturation.

The protein resides in the nucleus. In terms of biological role, chaperone protein which promotes assembly of the 20S proteasome as part of a heterodimer with psmg1. This is Proteasome assembly chaperone 2 from Xenopus laevis (African clawed frog).